The chain runs to 529 residues: Peptide chain release factor 3 (529 aa).

The tr-type G domain occupies 11-280 (AARRTFAIIS…GLVAWAPPPM (270 aa)). Residues 20 to 27 (SHPDAGKT), 88 to 92 (DTPGH), and 142 to 145 (NKVD) each bind GTP.

It belongs to the TRAFAC class translation factor GTPase superfamily. Classic translation factor GTPase family. PrfC subfamily.

It localises to the cytoplasm. In terms of biological role, increases the formation of ribosomal termination complexes and stimulates activities of RF-1 and RF-2. It binds guanine nucleotides and has strong preference for UGA stop codons. It may interact directly with the ribosome. The stimulation of RF-1 and RF-2 is significantly reduced by GTP and GDP, but not by GMP. The protein is Peptide chain release factor 3 of Sodalis glossinidius (strain morsitans).